Consider the following 77-residue polypeptide: U8-lycotoxin-Ls1u (77 aa).

The first 20 residues, 1–20, serve as a signal peptide directing secretion; the sequence is MKLIIFTGLVLFAIVSLIEA. Positions 21–26 are excised as a propeptide; it reads QAENEK.

The protein belongs to the neurotoxin 19 (CSTX) family. 08 (U8-Lctx) subfamily. Contains 4 disulfide bonds. Expressed by the venom gland.

It localises to the secreted. This is U8-lycotoxin-Ls1u from Lycosa singoriensis (Wolf spider).